A 367-amino-acid polypeptide reads, in one-letter code: D-alanine--D-alanine ligase (367 aa).

The ATP-grasp domain maps to 150–357 (KKLLASAGLP…YPTLLATMVE (208 aa)). Position 178-233 (178-233 (RERLGLPVFVKPSRGGSSIGVSRVTAWDELPAAIELARRHDPKVIIEAAVPGRELE)) interacts with ATP. Positions 312, 324, and 326 each coordinate Mg(2+).

This sequence belongs to the D-alanine--D-alanine ligase family. Mg(2+) serves as cofactor. Requires Mn(2+) as cofactor.

It localises to the cytoplasm. It carries out the reaction 2 D-alanine + ATP = D-alanyl-D-alanine + ADP + phosphate + H(+). Its pathway is cell wall biogenesis; peptidoglycan biosynthesis. Cell wall formation. This chain is D-alanine--D-alanine ligase, found in Mycolicibacterium gilvum (strain PYR-GCK) (Mycobacterium gilvum (strain PYR-GCK)).